A 187-amino-acid chain; its full sequence is MTSFHHDDPERAVKVHVTQGESHVTADPNVVMTTVLGSCIAACIRDPQSGVGGMNHFLLPDSGDGRRDGDAVRYGAYAMEVLINDLLKRGARRERLEAKIFGGAKLFDGLSDVGASNAAFAERFLRDEGIPIVSSSTGGVSARRVEFWPASGRVRQRLVAVDNAPQDVRRPTPPPMPAVASGDVDLF.

Residues 164–187 (APQDVRRPTPPPMPAVASGDVDLF) are disordered.

This sequence belongs to the CheD family.

It catalyses the reaction L-glutaminyl-[protein] + H2O = L-glutamyl-[protein] + NH4(+). Probably deamidates glutamine residues to glutamate on methyl-accepting chemotaxis receptors (MCPs), playing an important role in chemotaxis. The protein is Probable chemoreceptor glutamine deamidase CheD of Caulobacter vibrioides (strain ATCC 19089 / CIP 103742 / CB 15) (Caulobacter crescentus).